Reading from the N-terminus, the 112-residue chain is Gastrula zinc finger protein XlCGF9.1 (112 aa).

4 consecutive C2H2-type zinc fingers follow at residues 6–28, 34–56, 62–84, and 90–112; these read FICSDCGKCFNDSSILIRHMKIH, FCCPQCGRKFRRRAHLIVHERTH, FTCPECGKSFARRSHLMDHRIIH, and YSCPECGKCFGLQGYLNKHFKIH.

Belongs to the krueppel C2H2-type zinc-finger protein family.

It is found in the nucleus. In terms of biological role, may be involved in transcriptional regulation. This chain is Gastrula zinc finger protein XlCGF9.1, found in Xenopus laevis (African clawed frog).